Here is a 155-residue protein sequence, read N- to C-terminus: Ribosomal RNA large subunit methyltransferase H (155 aa).

S-adenosyl-L-methionine contacts are provided by residues Leu-72, Gly-103, and 122–127 (FGRMVW).

It belongs to the RNA methyltransferase RlmH family. In terms of assembly, homodimer.

Its subcellular location is the cytoplasm. The catalysed reaction is pseudouridine(1915) in 23S rRNA + S-adenosyl-L-methionine = N(3)-methylpseudouridine(1915) in 23S rRNA + S-adenosyl-L-homocysteine + H(+). Functionally, specifically methylates the pseudouridine at position 1915 (m3Psi1915) in 23S rRNA. The chain is Ribosomal RNA large subunit methyltransferase H from Cereibacter sphaeroides (strain ATCC 17023 / DSM 158 / JCM 6121 / CCUG 31486 / LMG 2827 / NBRC 12203 / NCIMB 8253 / ATH 2.4.1.) (Rhodobacter sphaeroides).